We begin with the raw amino-acid sequence, 384 residues long: Protein V (384 aa).

Disordered regions lie at residues 1-23 (MDQD…GGRE) and 38-317 (SEPT…TKKG). Over residues 7–20 (ILKEDSEVEREAPG) the composition is skewed to basic and acidic residues. The segment covering 50–59 (LHNTINTPQG) has biased composition (polar residues). Ser68 is modified (phosphoserine; by host). The segment covering 83–101 (RSGEESRVSGRTSKPEAEA) has biased composition (basic and acidic residues). Residue Ser125 is modified to Phosphoserine; by host. The segment covering 150-168 (GIEDENREMAAHPDKRGED) has biased composition (basic and acidic residues). The segment covering 191–206 (ASNNGRSMEPGSSHSA) has biased composition (polar residues). Residues Ser192, Ser249, Ser257, and Ser260 each carry the phosphoserine; by host modification. His318, Cys337, Cys341, Cys353, Cys355, Cys358, Cys362, and Cys365 together coordinate Zn(2+).

This sequence belongs to the paramyxoviruses V protein family. Interacts with host IFIH1/MDA5 and DHX58/LGP2. Interacts with host IRF3. Interacts with host RIGI regulatory protein (via CARDs domain) and host TRIM25 (via SPRY domain); these interactions prevent TRIM25-mediated ubiquitination of RIG-I and disrupts downstream RIG-I signaling.

It localises to the host cytoplasm. Its function is as follows. Plays an essential role in the inhibition of host immune response. Prevents the establishment of cellular antiviral state by blocking interferon-alpha/beta (IFN-alpha/beta) production and signaling pathway. Interacts with host IFIH1/MDA5 and DHX58/LGP2 to inhibit the transduction pathway involved in the activation of IFN-beta promoter, thus protecting the virus against cell antiviral state. Also interacts with and inhibits host IRF3. Blocks the type I interferon signaling pathway by disrupting the RIG-I signaling pathway. This Sendai virus (strain Fushimi) (SeV) protein is Protein V (P/V/C).